The chain runs to 340 residues: Methionine import ATP-binding protein MetN 2 (340 aa).

In terms of domain architecture, ABC transporter spans 5-244 (VRFESVTKTF…PQAPASKSFV (240 aa)). 41 to 48 (GYSGAGKS) contributes to the ATP binding site.

It belongs to the ABC transporter superfamily. Methionine importer (TC 3.A.1.24) family. The complex is composed of two ATP-binding proteins (MetN), two transmembrane proteins (MetI) and a solute-binding protein (MetQ).

The protein localises to the cell membrane. It carries out the reaction L-methionine(out) + ATP + H2O = L-methionine(in) + ADP + phosphate + H(+). The catalysed reaction is D-methionine(out) + ATP + H2O = D-methionine(in) + ADP + phosphate + H(+). In terms of biological role, part of the ABC transporter complex MetNIQ involved in methionine import. Responsible for energy coupling to the transport system. The protein is Methionine import ATP-binding protein MetN 2 of Rhodococcus jostii (strain RHA1).